The following is a 295-amino-acid chain: ATP synthase gamma chain (295 aa).

Belongs to the ATPase gamma chain family. In terms of assembly, F-type ATPases have 2 components, CF(1) - the catalytic core - and CF(0) - the membrane proton channel. CF(1) has five subunits: alpha(3), beta(3), gamma(1), delta(1), epsilon(1). CF(0) has three main subunits: a, b and c.

Its subcellular location is the cell inner membrane. Produces ATP from ADP in the presence of a proton gradient across the membrane. The gamma chain is believed to be important in regulating ATPase activity and the flow of protons through the CF(0) complex. The polypeptide is ATP synthase gamma chain (Sulfurovum sp. (strain NBC37-1)).